Reading from the N-terminus, the 272-residue chain is Shikimate dehydrogenase (NADP(+)) (272 aa).

Shikimate-binding positions include 14–16 and T61; that span reads SKS. K65 serves as the catalytic Proton acceptor. NADP(+) is bound at residue E77. The shikimate site is built by N86 and D102. NADP(+) is bound by residues 126–130, 149–154, and M213; these read GAGGA and NRTVSR. Y215 provides a ligand contact to shikimate. G237 is an NADP(+) binding site.

This sequence belongs to the shikimate dehydrogenase family. As to quaternary structure, homodimer.

The enzyme catalyses shikimate + NADP(+) = 3-dehydroshikimate + NADPH + H(+). Its pathway is metabolic intermediate biosynthesis; chorismate biosynthesis; chorismate from D-erythrose 4-phosphate and phosphoenolpyruvate: step 4/7. Its function is as follows. Involved in the biosynthesis of the chorismate, which leads to the biosynthesis of aromatic amino acids. Catalyzes the reversible NADPH linked reduction of 3-dehydroshikimate (DHSA) to yield shikimate (SA). The sequence is that of Shikimate dehydrogenase (NADP(+)) from Shigella sonnei (strain Ss046).